Consider the following 625-residue polypeptide: Pyriculol/pyriculariol biosynthesis cluster transcription factor 1 (625 aa).

Disordered regions lie at residues 1–83 and 466–496; these read MATE…ATQD and PMSA…LPAS. Over residues 46-59 the composition is skewed to low complexity; it reads TPSPSTPANPNSAS. A DNA-binding region (homeobox) is located at residues 73-132; the sequence is KNQKRQRATQDQLTTLEQEFAKNPTPTATVRDRIAEEINMTERSVQIWFQNRRAKIKLMA. The segment covering 467-496 has biased composition (polar residues); that stretch reads MSATTAPSPSEYNSPSFFSQAPENTPLPAS.

Its subcellular location is the nucleus. Transcriptional regulator; part of the gene cluster that mediates the biosynthesis of pyriculol and pyriculariol, two heptaketides that induce lesion formation upon application on rice leaves but are dispensable for pathogenicity. With TRF1, negatively regulates the expression of the gene cluster and the subsequent pyriculol and pyriculariol production. In Pyricularia oryzae (strain 70-15 / ATCC MYA-4617 / FGSC 8958) (Rice blast fungus), this protein is Pyriculol/pyriculariol biosynthesis cluster transcription factor 1.